A 117-amino-acid polypeptide reads, in one-letter code: Large ribosomal subunit protein bL19 (117 aa).

The protein belongs to the bacterial ribosomal protein bL19 family.

Functionally, this protein is located at the 30S-50S ribosomal subunit interface and may play a role in the structure and function of the aminoacyl-tRNA binding site. The polypeptide is Large ribosomal subunit protein bL19 (Shewanella piezotolerans (strain WP3 / JCM 13877)).